Reading from the N-terminus, the 541-residue chain is 2-succinyl-5-enolpyruvyl-6-hydroxy-3-cyclohexene-1-carboxylate synthase (541 aa).

The protein belongs to the TPP enzyme family. MenD subfamily. Homodimer. Requires Mg(2+) as cofactor. Mn(2+) is required as a cofactor. Thiamine diphosphate serves as cofactor.

It carries out the reaction isochorismate + 2-oxoglutarate + H(+) = 5-enolpyruvoyl-6-hydroxy-2-succinyl-cyclohex-3-ene-1-carboxylate + CO2. It functions in the pathway quinol/quinone metabolism; 1,4-dihydroxy-2-naphthoate biosynthesis; 1,4-dihydroxy-2-naphthoate from chorismate: step 2/7. Its pathway is quinol/quinone metabolism; menaquinone biosynthesis. Catalyzes the thiamine diphosphate-dependent decarboxylation of 2-oxoglutarate and the subsequent addition of the resulting succinic semialdehyde-thiamine pyrophosphate anion to isochorismate to yield 2-succinyl-5-enolpyruvyl-6-hydroxy-3-cyclohexene-1-carboxylate (SEPHCHC). The protein is 2-succinyl-5-enolpyruvyl-6-hydroxy-3-cyclohexene-1-carboxylate synthase of Rhodococcus opacus (strain B4).